Reading from the N-terminus, the 341-residue chain is Trans-3-hydroxy-L-proline dehydratase (341 aa).

Catalysis depends on S90, which acts as the Proton acceptor. Substrate contacts are provided by residues 91 to 92 (GS), D252, and 257 to 258 (GT).

This sequence belongs to the proline racemase family.

The catalysed reaction is trans-3-hydroxy-L-proline = 1-pyrroline-2-carboxylate + H2O. Functionally, catalyzes the dehydration of trans-3-hydroxy-L-proline (t3LHyp) to Delta(1)-pyrroline-2-carboxylate (Pyr2C). May be involved in a degradation pathway of t3LHyp, which would allow L.aggregata to grow on t3LHyp as a sole carbon source. Displays neither proline racemase activity nor 4-hydroxyproline 2-epimerase activity. This Roseibium aggregatum (strain ATCC 25650 / DSM 13394 / JCM 20685 / NBRC 16684 / NCIMB 2208 / IAM 12614 / B1) (Stappia aggregata) protein is Trans-3-hydroxy-L-proline dehydratase.